The chain runs to 435 residues: Transmembrane protein 130 (435 aa).

Residues 1–24 (MAQAVWSRLGRILWLACLLPWAPA) form the signal peptide. Over 25–339 (GVAAGLYELN…IQVWPSRIQP (315 aa)) the chain is Extracellular. N-linked (GlcNAc...) asparagine glycans are attached at residues Asn34, Asn197, and Asn300. In terms of domain architecture, PKD spans 147–233 (WPSSYLTKTV…AVKQKTGDFS (87 aa)). A helical membrane pass occupies residues 340 to 360 (AVFAFPCATLITVMLAFIMYM). The Cytoplasmic portion of the chain corresponds to 361-435 (TLRNATQQKD…LYKSVKTYTV (75 aa)).

The protein localises to the golgi apparatus membrane. This is Transmembrane protein 130 (TMEM130) from Homo sapiens (Human).